Reading from the N-terminus, the 30-residue chain is Chassatide C9 (30 aa).

The cyclopeptide (Gly-Asn) cross-link spans 1-30 (GIPCGESCVFIPCVTTVIGCSCKDKVCYNN). 3 disulfides stabilise this stretch: C4-C20, C8-C22, and C13-C27.

Post-translationally, this is a cyclic peptide.

In terms of biological role, probably participates in a plant defense mechanism. This Chassalia chartacea (Chassalia curviflora) protein is Chassatide C9.